The chain runs to 181 residues: Ribosome maturation factor RimM (181 aa).

The PRC barrel domain maps to 103 to 181 (EGDYYWSQLE…EMVVDWDPEF (79 aa)).

The protein belongs to the RimM family. As to quaternary structure, binds ribosomal protein uS19.

The protein resides in the cytoplasm. An accessory protein needed during the final step in the assembly of 30S ribosomal subunit, possibly for assembly of the head region. Essential for efficient processing of 16S rRNA. May be needed both before and after RbfA during the maturation of 16S rRNA. It has affinity for free ribosomal 30S subunits but not for 70S ribosomes. The chain is Ribosome maturation factor RimM from Marinomonas sp. (strain MWYL1).